The sequence spans 585 residues: A-type ATP synthase subunit A (585 aa).

231–238 (GPFGSGKT) serves as a coordination point for ATP.

The protein belongs to the ATPase alpha/beta chains family. As to quaternary structure, has multiple subunits with at least A(3), B(3), C, D, E, F, H, I and proteolipid K(x).

The protein resides in the cell membrane. It catalyses the reaction ATP + H2O + 4 H(+)(in) = ADP + phosphate + 5 H(+)(out). Its function is as follows. Produces ATP from ADP in the presence of a proton gradient across the membrane. The archaeal alpha chain is a catalytic subunit. In terms of biological role, component of the A-type ATP synthase that produces ATP from ADP in the presence of a proton gradient across the membrane. The A chain is the catalytic subunit. The sequence is that of A-type ATP synthase subunit A from Thermococcus sp. (strain KI).